The following is a 135-amino-acid chain: Putative pre-16S rRNA nuclease (135 aa).

This sequence belongs to the YqgF nuclease family.

The protein localises to the cytoplasm. In terms of biological role, could be a nuclease involved in processing of the 5'-end of pre-16S rRNA. The sequence is that of Putative pre-16S rRNA nuclease from Maridesulfovibrio salexigens (strain ATCC 14822 / DSM 2638 / NCIMB 8403 / VKM B-1763) (Desulfovibrio salexigens).